A 352-amino-acid chain; its full sequence is Alanine racemase (352 aa).

K34 (proton acceptor; specific for D-alanine) is an active-site residue. An N6-(pyridoxal phosphate)lysine modification is found at K34. R126 provides a ligand contact to substrate. Y248 acts as the Proton acceptor; specific for L-alanine in catalysis. M296 is a binding site for substrate.

This sequence belongs to the alanine racemase family. It depends on pyridoxal 5'-phosphate as a cofactor.

It catalyses the reaction L-alanine = D-alanine. It participates in amino-acid biosynthesis; D-alanine biosynthesis; D-alanine from L-alanine: step 1/1. Catalyzes the interconversion of L-alanine and D-alanine. May also act on other amino acids. The sequence is that of Alanine racemase (alr) from Deinococcus deserti (strain DSM 17065 / CIP 109153 / LMG 22923 / VCD115).